The sequence spans 258 residues: NAD-dependent protein deacylase (258 aa).

Residues 3 to 258 (ERQLEKSIEH…LPALMRGLSA (256 aa)) enclose the Deacetylase sirtuin-type domain. An NAD(+)-binding site is contributed by 28–48 (GAGMSADSGLETYRDDKTGLW). Tyrosine 73 and arginine 76 together coordinate substrate. 109–112 (QNID) is a binding site for NAD(+). Residue histidine 127 is the Proton acceptor of the active site. Zn(2+) is bound by residues cysteine 135, cysteine 138, cysteine 161, and cysteine 164. Residues 201 to 203 (GTS) and alanine 245 each bind NAD(+).

The protein belongs to the sirtuin family. Class III subfamily. Zn(2+) is required as a cofactor.

Its subcellular location is the cytoplasm. The enzyme catalyses N(6)-acetyl-L-lysyl-[protein] + NAD(+) + H2O = 2''-O-acetyl-ADP-D-ribose + nicotinamide + L-lysyl-[protein]. It catalyses the reaction N(6)-succinyl-L-lysyl-[protein] + NAD(+) + H2O = 2''-O-succinyl-ADP-D-ribose + nicotinamide + L-lysyl-[protein]. In terms of biological role, NAD-dependent lysine deacetylase and desuccinylase that specifically removes acetyl and succinyl groups on target proteins. Modulates the activities of several proteins which are inactive in their acylated form. In Corynebacterium glutamicum (strain ATCC 13032 / DSM 20300 / JCM 1318 / BCRC 11384 / CCUG 27702 / LMG 3730 / NBRC 12168 / NCIMB 10025 / NRRL B-2784 / 534), this protein is NAD-dependent protein deacylase.